Reading from the N-terminus, the 102-residue chain is uncharacterized protein (102 aa).

The first 41 residues, 1–41 (MLFLDSYSLLIQFQRFKNWESPRRFSSSFPLLLFVFKPIFA), serve as a signal peptide directing secretion.

This is an uncharacterized protein from Saccharomyces cerevisiae (strain ATCC 204508 / S288c) (Baker's yeast).